Reading from the N-terminus, the 1223-residue chain is Rho family-interacting cell polarization regulator 1 (1223 aa).

Phosphoserine is present on Ser-22. Residues 89–114 adopt a coiled-coil conformation; it reads LTAYLEVHQQEQEKLQGQIRESKRNS. Phosphoserine is present on residues Ser-349 and Ser-351. Thr-355 carries the phosphothreonine modification. Positions 375–411 are disordered; sequence NGTAWSLSSESSDDSSSPQLSGTARHSPAPRPLVQQP. Residues 380–395 show a composition bias toward low complexity; that stretch reads SLSSESSDDSSSPQLS. Phosphoserine is present on residues Ser-456 and Ser-459. Disordered stretches follow at residues 475–769 and 856–889; these read ESLA…APQH and FLNEDEDEDNDVPGDRPPSSPEAGAEDSIDSPSA. Low complexity-rich tracts occupy residues 505-523 and 546-564; these read GHSATSSTLGTTGSVPTST and PGPTHTTTGSTYSAITTTH. Residues 565–592 are compositionally biased toward polar residues; it reads SAPSPLTHTTTGSTHKPIISTLTTTGPT. 2 stretches are compositionally biased toward low complexity: residues 601–650 and 659–675; these read TTTS…PTPS and TSPTHPTTSPTHPTTSP. Residues 680-695 are compositionally biased toward polar residues; it reads VSPSTSLELATLSSPS. The segment covering 858-867 has biased composition (acidic residues); it reads NEDEDEDNDV. Ser-874 and Ser-875 each carry phosphoserine.

It belongs to the RIPOR family. In terms of assembly, interacts (via N-terminus) with RHOA (GTP-bound form); this interaction links active RHOA to STK24 and STK26 kinases. Interacts with RHOB. Interacts with RHOC. Interacts (via C-terminus) with PDCD10; this interaction occurs in a Rho-independent manner. Interacts (via C-terminus) with STK24; this interaction occurs in a PDCD10-dependent and Rho-independent manner. Interacts (via C-terminus) with STK26; this interaction occurs in a PDCD10-dependent and Rho-independent manner. Interacts (via N-terminus) with 14-3-3 proteins; these interactions occur in a Rho-dependent manner.

It localises to the cytoplasm. The protein localises to the golgi apparatus. Downstream effector protein for Rho-type small GTPases that plays a role in cell polarity and directional migration. Acts as an adapter protein, linking active Rho proteins to STK24 and STK26 kinases, and hence positively regulates Golgi reorientation in polarized cell migration upon Rho activation. Involved in the subcellular relocation of STK26 from the Golgi to cytoplasm punctae in a Rho- and PDCD10-dependent manner upon serum stimulation. In Homo sapiens (Human), this protein is Rho family-interacting cell polarization regulator 1 (RIPOR1).